The following is a 185-amino-acid chain: Probable RNA polymerase sigma-C factor (185 aa).

A Polymerase core binding motif is present at residues 52-65; sequence DLTQETFLRAIGAI. The H-T-H motif DNA-binding region spans 149–168; that stretch reads YADAAAVCGCPVGTIRSRVA.

Belongs to the sigma-70 factor family. ECF subfamily.

Sigma factors are initiation factors that promote the attachment of RNA polymerase to specific initiation sites and are then released. The protein is Probable RNA polymerase sigma-C factor (sigC) of Mycobacterium bovis (strain ATCC BAA-935 / AF2122/97).